Reading from the N-terminus, the 930-residue chain is Protocadherin gamma-B6 (930 aa).

An N-terminal signal peptide occupies residues 1-30 (MGGSCAQRRRAGPRQVLFPLLLPFFYPTLC). Cadherin domains lie at 31–133 (EPIR…APQF), 134–242 (DKKE…PPVF), 243–347 (SRDE…SPEI), 348–452 (IITS…APVF), 453–562 (DQTS…APRV), and 570–675 (DGSA…LPDL). Topologically, residues 31 to 691 (EPIRYSIPEE…SDPQAELQFY (661 aa)) are extracellular. N-linked (GlcNAc...) asparagine glycans are attached at residues N304, N419, and N545. Residues 692-712 (LVVALALISVLFLLAVILAIA) form a helical membrane-spanning segment. Residues 713–930 (LRLRRSLSPT…KKKSGKKEKK (218 aa)) lie on the Cytoplasmic side of the membrane. Disordered regions lie at residues 791–839 (PHGG…WPNN) and 900–930 (ATLTNAAGKRDGKAPAGGNGNKKKSGKKEKK). A compositionally biased stretch (polar residues) spans 800 to 839 (HPETLTSQAPPNTDWRFSQAQRPGTSGSQNGDDTGTWPNN). Residues 920-930 (NKKKSGKKEKK) show a composition bias toward basic residues.

Its subcellular location is the cell membrane. Its function is as follows. Potential calcium-dependent cell-adhesion protein. May be involved in the establishment and maintenance of specific neuronal connections in the brain. In Pan troglodytes (Chimpanzee), this protein is Protocadherin gamma-B6 (PCDHGB6).